A 273-amino-acid chain; its full sequence is Ribonuclease Z (273 aa).

Residues His-61, His-63, His-146, Asp-169, and His-233 each contribute to the Zn(2+) site.

This sequence belongs to the RNase Z family. Homodimer. Zn(2+) is required as a cofactor.

It carries out the reaction Endonucleolytic cleavage of RNA, removing extra 3' nucleotides from tRNA precursor, generating 3' termini of tRNAs. A 3'-hydroxy group is left at the tRNA terminus and a 5'-phosphoryl group is left at the trailer molecule.. Its function is as follows. Zinc phosphodiesterase, which displays some tRNA 3'-processing endonuclease activity. Probably involved in tRNA maturation, by removing a 3'-trailer from precursor tRNA. This Mycobacterium tuberculosis (strain ATCC 25177 / H37Ra) protein is Ribonuclease Z.